The sequence spans 309 residues: DSC E3 ubiquitin ligase complex subunit C (309 aa).

N-linked (GlcNAc...) asparagine glycosylation occurs at N61. Disordered stretches follow at residues 88 to 110 (LPPSPSRTPVVQEDATTVKGKGK) and 148 to 177 (EQADEDYTGRKKQQQPPPSTTSAPRGFDRL). The next 2 membrane-spanning stretches (helical) occupy residues 257 to 277 (DDMLWGAVMGFFWPVGCAMWL) and 289 to 309 (GLAVFVGVVINVAFGAMRIMN).

The protein belongs to the dsc3 family. In terms of assembly, component of the DSC E3 ubiquitin ligase complex composed of dscA, dscB, dscC and dscD.

It localises to the endoplasmic reticulum membrane. It participates in protein modification; protein ubiquitination. Component of the DSC E3 ubiquitin ligase complex which is required for the srbA transcriptional activator proteolytic cleavage to release the soluble transcription factor from the membrane in low oxygen or sterol conditions. Required for growth during hypoxia and triazole drug susceptibility, as well as for virulence in a murine model of invasive pulmonary aspergillosis (IPA). The polypeptide is DSC E3 ubiquitin ligase complex subunit C (Aspergillus fumigatus (strain ATCC MYA-4609 / CBS 101355 / FGSC A1100 / Af293) (Neosartorya fumigata)).